Consider the following 402-residue polypeptide: Protein indeterminate-domain 12 (402 aa).

The tract at residues 47-66 (TETHKPKKKRGLPGNPDPDA) is disordered. A Phosphoserine modification is found at Ser72. C2H2-type zinc fingers lie at residues 82–104 (FVCE…RRGH) and 124–154 (YVCP…CRKH). Positions 146–153 (IKKHFCRK) match the Nuclear localization signal motif. The C2H2-type 2; degenerate zinc-finger motif lies at 159 to 183 (WKCEKCSKFYAVQSDWKAHTKICGT). Zn(2+)-binding residues include Cys161, Cys164, His177, Cys181, Cys188, Cys190, His203, and Cys207. A CCHC-type 2; atypical zinc finger spans residues 186–209 (YRCDCGTLFSRKDTFITHRAFCDA). An SHR-binding region spans residues 196 to 208 (RKDTFITHRAFCD).

Its subcellular location is the nucleus. Its function is as follows. Probable transcription factor. This is Protein indeterminate-domain 12 from Arabidopsis thaliana (Mouse-ear cress).